The following is a 2364-amino-acid chain: Actin-binding protein F (2364 aa).

Low complexity predominate over residues 138–157; sequence THQTSPTTETTTTPSSSSSS. Disordered stretches follow at residues 138–168, 1087–1111, 1412–1435, and 1929–2088; these read THQT…STLD, QASK…EKRR, NNNS…RAPM, and KLIS…SEFN. Positions 1092–1111 are enriched in basic and acidic residues; sequence NESEVKDEKSMRNRQVEKRR. Low complexity-rich tracts occupy residues 1412–1428 and 1932–1960; these read NNNS…NSFG and SSST…TTTD. A coiled-coil region spans residues 1960–2017; it reads DSSKDKKKLEKEEKQREKERKQKEKEDKKREKEELKKKEKEEKKKKEEEKKLKKKSGS. Residues 1961–2010 show a composition bias toward basic and acidic residues; that stretch reads SSKDKKKLEKEEKQREKERKQKEKEDKKREKEELKKKEKEEKKKKEEEKK. A compositionally biased stretch (low complexity) spans 2027 to 2047; the sequence is ATPTTTTTTEATTTTTTTTAT. A compositionally biased stretch (basic and acidic residues) spans 2052–2070; that stretch reads IKPEKIASDDEHDDHHHDE. Over residues 2071 to 2081 the composition is skewed to acidic residues; that stretch reads HDEEDDDDEPL. Positions 2129–2173 form a coiled coil; the sequence is VQRWNSLFKDLRNKVDQVSNKDSVEIDYEKEIDRERRQNKMASNE.

Interacts with actin.

The protein resides in the nucleus. It localises to the cytoplasm. Its subcellular location is the cytoskeleton. The polypeptide is Actin-binding protein F (abpF) (Dictyostelium discoideum (Social amoeba)).